The following is a 432-amino-acid chain: Adenylosuccinate synthetase (432 aa).

Residues 13–19 (GDEGKGK) and 41–43 (GHT) contribute to the GTP site. Asp-14 serves as the catalytic Proton acceptor. 2 residues coordinate Mg(2+): Asp-14 and Gly-41. Residues 14 to 17 (DEGK), 39 to 42 (NAGH), Thr-130, Arg-144, Gln-225, Thr-240, and Arg-304 each bind IMP. Catalysis depends on His-42, which acts as the Proton donor. 300-306 (ATTGRKR) is a substrate binding site. GTP-binding positions include Arg-306, 332-334 (KLD), and 415-417 (STG).

This sequence belongs to the adenylosuccinate synthetase family. As to quaternary structure, homodimer. Mg(2+) is required as a cofactor.

The protein resides in the cytoplasm. The enzyme catalyses IMP + L-aspartate + GTP = N(6)-(1,2-dicarboxyethyl)-AMP + GDP + phosphate + 2 H(+). It participates in purine metabolism; AMP biosynthesis via de novo pathway; AMP from IMP: step 1/2. Functionally, plays an important role in the de novo pathway of purine nucleotide biosynthesis. Catalyzes the first committed step in the biosynthesis of AMP from IMP. The chain is Adenylosuccinate synthetase from Photobacterium profundum (strain SS9).